An 833-amino-acid polypeptide reads, in one-letter code: Ventricular zone-expressed PH domain-containing protein 1 (833 aa).

2 interaction with TGFBR1 regions span residues 201-319 (AELL…LANM) and 663-833 (ESTF…TTYL). Residues 716–819 (QPLIEGKLKE…WLQCINVALA (104 aa)) enclose the PH domain.

The protein belongs to the MELT/VEPH family. In terms of assembly, interacts with TGFBR1. As to expression, specifically expressed in kidney and eye. In the eye, expressed in retinal pigmented epithelium but not in the neural retina.

It localises to the cell membrane. Its function is as follows. Interacts with TGF-beta receptor type-1 (TGFBR1) and inhibits dissociation of activated SMAD2 from TGFBR1, impeding its nuclear accumulation and resulting in impaired TGF-beta signaling. May also affect FOXO, Hippo and Wnt signaling. In Mus musculus (Mouse), this protein is Ventricular zone-expressed PH domain-containing protein 1 (Veph1).